A 130-amino-acid polypeptide reads, in one-letter code: Profilin-1 (130 aa).

The protein belongs to the profilin family. As to quaternary structure, interacts with actin. Interacts with RHO1 (GTP-bound form).

The protein localises to the cytoplasm. The protein resides in the cytoskeleton. It localises to the cell projection. It is found in the phagocytic cup. Its subcellular location is the cytoplasmic vesicle. The protein localises to the phagosome. In terms of biological role, binds to actin and affects the structure of the cytoskeleton. At high concentrations, profilin prevents the polymerization of actin, whereas it enhances it at low concentrations. By binding to PIP2, it inhibits the formation of IP3 and DG. The polypeptide is Profilin-1 (Entamoeba histolytica (strain ATCC 30459 / HM-1:IMSS / ABRM)).